A 576-amino-acid chain; its full sequence is Putative diflavin flavoprotein A 1 (576 aa).

The tract at residues 48-240 (RNGTTYNSFL…LAIKTVATGH (193 aa)) is zinc metallo-hydrolase. Residues His97, Glu99, Asp101, His164, Asp183, and His240 each coordinate Fe cation. Residues 269 to 431 (VALFYAEDYG…DLEKALGRIS (163 aa)) enclose the Flavodoxin-like domain. Residues 432 to 576 (TGLYIITTKK…VHHRKVGNHY (145 aa)) form a flavodoxin-reductase-like region.

The protein in the N-terminal section; belongs to the zinc metallo-hydrolase group 3 family. It in the C-terminal section; belongs to the flavodoxin reductase family. Fe cation serves as cofactor.

In terms of biological role, mediates electron transfer from NADH to oxygen, reducing it to water. This modular protein has 3 redox cofactors, in other organisms the same activity requires 2 or 3 proteins. This chain is Putative diflavin flavoprotein A 1 (dfa1), found in Nostoc sp. (strain PCC 7120 / SAG 25.82 / UTEX 2576).